The following is a 293-amino-acid chain: Ribosomal protein L11 methyltransferase (293 aa).

S-adenosyl-L-methionine contacts are provided by T145, G166, D188, and N230.

It belongs to the methyltransferase superfamily. PrmA family.

The protein resides in the cytoplasm. The catalysed reaction is L-lysyl-[protein] + 3 S-adenosyl-L-methionine = N(6),N(6),N(6)-trimethyl-L-lysyl-[protein] + 3 S-adenosyl-L-homocysteine + 3 H(+). In terms of biological role, methylates ribosomal protein L11. The protein is Ribosomal protein L11 methyltransferase of Shewanella baltica (strain OS223).